The chain runs to 139 residues: uncharacterized protein (139 aa).

This is an uncharacterized protein from Sinorhizobium fredii (strain NBRC 101917 / NGR234).